Consider the following 295-residue polypeptide: MEHFRNIGIIGRLGSTQVVDTIRRLKRFLLDRHLHVILDEGIAELLPGHGLQVSSRKQLGEVCDMVVVVGGDGSMLGAARALARYKVPVLGINRGSLGFLTDIRPDELETRVAEVLDGQYTVESRFLLETQVRRKLEPIGQGDALNDVVLHPGKSTRMIEFELYIDGQFVCSQKSDGLIVSTPTGSTAYALSAGGPIMHPKLDAIVIVPMYPHTLSSRPIVVAGNSELKIVVSPKMDIYPQVSCDGQNHFTCSPGDIVTISKKPQRLQLIHPLDHNYYEVCRTKLGWGSRLGGGS.

The active-site Proton acceptor is Asp72. Residues 72–73 (DG), 146–147 (ND), Arg157, Lys174, Asp176, 187–192 (TAYALS), and Gln247 each bind NAD(+).

The protein belongs to the NAD kinase family. A divalent metal cation serves as cofactor.

The protein localises to the cytoplasm. The enzyme catalyses NAD(+) + ATP = ADP + NADP(+) + H(+). Involved in the regulation of the intracellular balance of NAD and NADP, and is a key enzyme in the biosynthesis of NADP. Catalyzes specifically the phosphorylation on 2'-hydroxyl of the adenosine moiety of NAD to yield NADP. In Azotobacter vinelandii (strain DJ / ATCC BAA-1303), this protein is NAD kinase.